The chain runs to 504 residues: Fibroblast growth factor receptor-like 1 (504 aa).

A signal peptide spans 1-24 (MTPSPLLLLLLPPLLLGAFPPAAA). The Extracellular segment spans residues 25–378 (ARGPPKMADK…SSSATSLPWP (354 aa)). Residues 29–115 (PKMADKVVPR…GSLSVNYTLV (87 aa)) enclose the Ig-like C2-type 1 domain. Residues cysteine 51 and cysteine 99 are joined by a disulfide bond. Asparagine 111 is a glycosylation site (N-linked (GlcNAc...) asparagine). Residues 123–155 (GKESLGPDSSSGGQEDPASQQWARPRFTQPSKM) are disordered. The segment covering 129–144 (PDSSSGGQEDPASQQW) has biased composition (polar residues). Ig-like C2-type domains are found at residues 147-237 (PRFT…YKVD) and 246-354 (PVLT…AFLT). A disulfide bond links cysteine 172 and cysteine 221. Residues asparagine 231, asparagine 255, and asparagine 293 are each glycosylated (N-linked (GlcNAc...) asparagine). A disulfide bridge connects residues cysteine 268 and cysteine 338. A helical transmembrane segment spans residues 379 to 399 (VVIGIPAGAVFILGTLLLWLC). Topologically, residues 400–504 (QAQKKPCTPA…KVHQHIHYQC (105 aa)) are cytoplasmic. The span at 407 to 418 (TPAPAPPLPGHR) shows a compositional bias: pro residues. Positions 407–435 (TPAPAPPLPGHRPPGTARDRSGDKDLPSL) are disordered. Residues 423-432 (ARDRSGDKDL) show a composition bias toward basic and acidic residues.

In terms of assembly, interacts with FGF2 with a low affinity. In terms of tissue distribution, expressed preferentially in cartilaginous tissues and pancreas. Highly expressed in the liver, kidney, heart, brain and skeletal muscle. Weakly expressed in the lung, small intestine and spleen.

The protein resides in the membrane. Has a negative effect on cell proliferation. This Homo sapiens (Human) protein is Fibroblast growth factor receptor-like 1 (FGFRL1).